The chain runs to 365 residues: Isopentenyl-diphosphate delta-isomerase (365 aa).

8–9 (RK) is a substrate binding site. Residues 67–69 (SIT), serine 97, and asparagine 126 each bind FMN. 97–99 (SQR) serves as a coordination point for substrate. Position 160 (glutamine 160) interacts with substrate. Glutamate 161 serves as a coordination point for Mg(2+). FMN-binding positions include lysine 192, threonine 222, 272 to 274 (GVR), and 293 to 294 (AL).

This sequence belongs to the IPP isomerase type 2 family. In terms of assembly, homooctamer. Dimer of tetramers. It depends on FMN as a cofactor. NADPH serves as cofactor. The cofactor is Mg(2+).

The protein localises to the cytoplasm. The enzyme catalyses isopentenyl diphosphate = dimethylallyl diphosphate. Its function is as follows. Involved in the biosynthesis of isoprenoids. Catalyzes the 1,3-allylic rearrangement of the homoallylic substrate isopentenyl (IPP) to its allylic isomer, dimethylallyl diphosphate (DMAPP). The chain is Isopentenyl-diphosphate delta-isomerase from Methanosarcina acetivorans (strain ATCC 35395 / DSM 2834 / JCM 12185 / C2A).